The sequence spans 238 residues: 3-dehydroquinate dehydratase (238 aa).

Residues 35 to 37 (ELR) and R70 each bind 3-dehydroquinate. The active-site Proton donor/acceptor is H133. K160 (schiff-base intermediate with substrate) is an active-site residue. Residues R202 and Q225 each coordinate 3-dehydroquinate.

Belongs to the type-I 3-dehydroquinase family. In terms of assembly, homodimer.

It carries out the reaction 3-dehydroquinate = 3-dehydroshikimate + H2O. The protein operates within metabolic intermediate biosynthesis; chorismate biosynthesis; chorismate from D-erythrose 4-phosphate and phosphoenolpyruvate: step 3/7. In terms of biological role, involved in the third step of the chorismate pathway, which leads to the biosynthesis of aromatic amino acids. Catalyzes the cis-dehydration of 3-dehydroquinate (DHQ) and introduces the first double bond of the aromatic ring to yield 3-dehydroshikimate. The chain is 3-dehydroquinate dehydratase from Staphylococcus aureus (strain MSSA476).